A 310-amino-acid chain; its full sequence is CCR4-NOT transcription complex subunit 7 (310 aa).

Residues aspartate 51, glutamate 53, aspartate 172, and aspartate 245 each coordinate a divalent metal cation.

The protein belongs to the CAF1 family. In terms of assembly, component of the CCR4-NOT complex at least composed of ccf-1, ccr-4 and let-711, which is required for germ cell development in hermaphrodites. Within the complex interacts with let-711. Highly expressed in the germline. In particular, highly expressed in germ cells that enter meiosis and progress through the pachytene stage.

Its subcellular location is the nucleus. The protein resides in the cytoplasm. The enzyme catalyses Exonucleolytic cleavage of poly(A) to 5'-AMP.. Functionally, catalytic component of the CCR4-NOT complex which is one of the major cellular mRNA deadenylases and is linked to various cellular processes including bulk mRNA degradation, miRNA-mediated repression, translational repression during translational initiation and general transcription regulation. Within the complex, plays a role in miRNA-mediated deadenylation in embryos. Within the complex promotes germ cell development and fertility in hermaphrodites. Additional complex functions may be a consequence of its influence on mRNA expression. The protein is CCR4-NOT transcription complex subunit 7 of Caenorhabditis elegans.